The sequence spans 595 residues: Threonine dehydratase 2 biosynthetic, chloroplastic (595 aa).

Residues 1 to 51 (MEFLCLAPTRSFSTNPKLTKSIPSDHTSTTSRIFTYQNMRGSTMRPLALPL) constitute a chloroplast transit peptide. Lys143 is subject to N6-(pyridoxal phosphate)lysine. ACT-like domains are found at residues 420-492 (ALLA…NLSH) and 514-585 (IFGE…LDNY).

Belongs to the serine/threonine dehydratase family. As to quaternary structure, homotetramer. Pyridoxal 5'-phosphate is required as a cofactor. In terms of processing, proteolytically cleaved by a chymotrypsin-like digestive protease in the midgut of the lepidopteran insects to remove the C-terminal regulatory domain, which allows efficient metabolizing of threonine in the presence of high isoleucine levels in the gut. Expressed in floral buds, 8-9 mm long flowers 1 to 2 days before anthesis, open flowers and floral organs including sepals, petals, stamens and carpels of 8-9 mm flowers (at protein level). Expressed in very early floral meristems of the anantha. Over 500-fold expression in mature flowers compared to leaves. Expressed in sepals, petals, stamens and carpels of the mature flower. In sepals, mostly expressed in the abaxial mesophyll cells and in petals in parenchymal cells. Not expressed in epidermal or vascular tissues of sepals and petals. In stamens, expressed in parenchymal cells of the connective and lobes, but not expressed in differentiated tissues such as tapetum (TP), stomium (SM), or pollen grains (PG). Not expressed in roots or seeds. High level of expression in immature flower buds, unopened flowers and opened flowers. Not expressed in unstressed leaves, root, stem or petiole.

The protein resides in the plastid. It localises to the chloroplast. The enzyme catalyses L-threonine = 2-oxobutanoate + NH4(+). The catalysed reaction is L-serine = pyruvate + NH4(+). The protein operates within amino-acid biosynthesis; L-isoleucine biosynthesis; 2-oxobutanoate from L-threonine: step 1/1. Its activity is regulated as follows. Threonine dehydratase 2 biosynthetic, chloroplastic: Strongly inhibited by 1 mM isoleucine. Processed threonine dehydratase 2: Not inhibited by isoleucine. Its function is as follows. Not required for normal growth and development of the plant. In terms of biological role, involved in defense against lepidopteran, but not coleopteran herbivore insects. Acts in the insect gut to degrade threonine, which is an essential and limiting nutrient for the growth of lepidopteran larvae. Active against both L-threonine and L-serine. The polypeptide is Threonine dehydratase 2 biosynthetic, chloroplastic (Solanum lycopersicum (Tomato)).